The following is a 245-amino-acid chain: DNA repair protein RecO (245 aa).

It belongs to the RecO family.

Involved in DNA repair and RecF pathway recombination. The sequence is that of DNA repair protein RecO from Bartonella bacilliformis (strain ATCC 35685 / KC583 / Herrer 020/F12,63).